A 271-amino-acid chain; its full sequence is Ribosomal RNA small subunit methyltransferase A (271 aa).

Residues His-11, Leu-13, Gly-38, Glu-58, Asp-86, and Asn-101 each contribute to the S-adenosyl-L-methionine site.

It belongs to the class I-like SAM-binding methyltransferase superfamily. rRNA adenine N(6)-methyltransferase family. RsmA subfamily.

It localises to the cytoplasm. The enzyme catalyses adenosine(1518)/adenosine(1519) in 16S rRNA + 4 S-adenosyl-L-methionine = N(6)-dimethyladenosine(1518)/N(6)-dimethyladenosine(1519) in 16S rRNA + 4 S-adenosyl-L-homocysteine + 4 H(+). Its function is as follows. Specifically dimethylates two adjacent adenosines (A1518 and A1519) in the loop of a conserved hairpin near the 3'-end of 16S rRNA in the 30S particle. May play a critical role in biogenesis of 30S subunits. In Helicobacter pylori (strain P12), this protein is Ribosomal RNA small subunit methyltransferase A.